Reading from the N-terminus, the 381-residue chain is Creatine kinase B-type (381 aa).

Ser-4 carries the phosphoserine modification. A Phosphagen kinase N-terminal domain is found at Lys-11–Gly-98. Thr-35 is subject to Phosphothreonine. Lys-45 is covalently cross-linked (Glycyl lysine isopeptide (Lys-Gly) (interchain with G-Cter in ubiquitin)). A creatine-binding site is contributed by Val-72. A compositionally biased stretch (basic and acidic residues) spans Arg-96–Leu-110. Positions Arg-96–Asp-122 are disordered. Residue Lys-107 forms a Glycyl lysine isopeptide (Lys-Gly) (interchain with G-Cter in ubiquitin) linkage. The residue at position 125 (Tyr-125) is a Phosphotyrosine. A Phosphagen kinase C-terminal domain is found at Tyr-125–Leu-367. ATP contacts are provided by residues Ser-128–Arg-132, Arg-130, Arg-132, and His-191. The internal MTS-like signal stretch occupies residues Arg-130–Arg-138. A Phosphoserine modification is found at Ser-199. Glu-232 is a binding site for creatine. ATP is bound at residue Arg-236. 3'-nitrotyrosine is present on Tyr-269. Ser-285 is a binding site for creatine. Arg-292 contacts ATP. Residue Ser-309 is modified to Phosphoserine. ATP is bound by residues Arg-320, Arg-320–Val-325, and Asp-335. A Phosphothreonine modification is found at Thr-322. Lys-381 is covalently cross-linked (Glycyl lysine isopeptide (Lys-Gly) (interchain with G-Cter in ubiquitin)).

It belongs to the ATP:guanido phosphotransferase family. In terms of assembly, dimer of identical or non-identical chains, which can be either B (brain type) or M (muscle type). With MM being the major form in skeletal muscle and myocardium, MB existing in myocardium, and BB existing in many tissues, especially brain. Interacts with SLC12A6 (via C-terminus); the interaction may be required for SLC12A6 potassium-chloride cotransport activity. Ubiquitinated by the ECS(ASB9) complex, leading to its degradation by the proteasome. In the kidney localized primarily in the outer medulla in the thick ascending limb and distal convoluted tubule.

Its subcellular location is the cytoplasm. It localises to the cytosol. It is found in the mitochondrion. The protein resides in the cell membrane. The enzyme catalyses creatine + ATP = N-phosphocreatine + ADP + H(+). Its function is as follows. Reversibly catalyzes the transfer of phosphate between ATP and various phosphogens (e.g. creatine phosphate). Creatine kinase isoenzymes play a central role in energy transduction in tissues with large, fluctuating energy demands, such as skeletal muscle, heart, brain and spermatozoa. Acts as a key regulator of adaptive thermogenesis as part of the futile creatine cycle: localizes to the mitochondria of thermogenic fat cells and acts by mediating phosphorylation of creatine to initiate a futile cycle of creatine phosphorylation and dephosphorylation. During the futile creatine cycle, creatine and N-phosphocreatine are in a futile cycle, which dissipates the high energy charge of N-phosphocreatine as heat without performing any mechanical or chemical work. The protein is Creatine kinase B-type (Ckb) of Rattus norvegicus (Rat).